Consider the following 144-residue polypeptide: uncharacterized protein (144 aa).

Over residues 124-133 the composition is skewed to basic residues; it reads KALNRKKSKT. Residues 124-144 form a disordered region; it reads KALNRKKSKTKNGEKNGEGKS. Residues 134–144 show a composition bias toward basic and acidic residues; the sequence is KNGEKNGEGKS.

This is an uncharacterized protein from Acidianus filamentous virus 1 (isolate United States/Yellowstone) (AFV-1).